The following is a 75-amino-acid chain: Small ribosomal subunit protein bS18 (75 aa).

This sequence belongs to the bacterial ribosomal protein bS18 family. In terms of assembly, part of the 30S ribosomal subunit. Forms a tight heterodimer with protein bS6.

In terms of biological role, binds as a heterodimer with protein bS6 to the central domain of the 16S rRNA, where it helps stabilize the platform of the 30S subunit. The protein is Small ribosomal subunit protein bS18 of Ruegeria sp. (strain TM1040) (Silicibacter sp.).